The sequence spans 518 residues: MTHLRFDNRLRQQLPGDPEEGSRRREVSVAWSAVLPTPVAAPSLIAHSAEMAQVLGLDAAEIASAQFAQVFGGNALYPGMQPWAVNYGGHQFGHWAGQLGDGRAISLGEAIGTDGGRYELQLKGAGPTPYSRGADGRAVLRSSIREFLCSEAMHHLGVPTTRALSLVGTGDAVVRDMFYDGHPQREPGAIVCRVAPSFIRFGNFELPSARGDIALLRQWVDFTIARDFPALAGAGEALYAGWFAQVCERTAVMVAHWMRVGFVHGVMNTDNMSILGLTIDYGPYGWVDDYDPDWTPNTTDAQGRRYRFGTQPQVAYWNLGRLAQALAPLFPDQAPLQHGLDRFRDTYLACDRHDTAAKLGLAECRDEDLQLIDALRALMRESEMDMTLTFRGLIDLSPDHPDPAQLREAFYDEDKRVADAPQLQQWLQRYAARLQQDPLPPDARRARMRLANPRYVLRNYLAQQAIDRAEQGDPSGVQELLEVMRHPYDDQPGRDAFAARRPEWARDRAGCSMLSCSS.

The segment covering 1–10 (MTHLRFDNRL) has biased composition (basic and acidic residues). Positions 1–23 (MTHLRFDNRLRQQLPGDPEEGSR) are disordered. Residues Gly100, Gly102, Arg103, Lys123, Asp135, Gly136, Arg193, and Arg200 each contribute to the ATP site. The active-site Proton acceptor is the Asp270. Positions 271 and 280 each coordinate Mg(2+). Residue Asp280 coordinates ATP.

Belongs to the SELO family. Requires Mg(2+) as cofactor. The cofactor is Mn(2+).

The catalysed reaction is L-seryl-[protein] + ATP = 3-O-(5'-adenylyl)-L-seryl-[protein] + diphosphate. The enzyme catalyses L-threonyl-[protein] + ATP = 3-O-(5'-adenylyl)-L-threonyl-[protein] + diphosphate. It carries out the reaction L-tyrosyl-[protein] + ATP = O-(5'-adenylyl)-L-tyrosyl-[protein] + diphosphate. It catalyses the reaction L-histidyl-[protein] + UTP = N(tele)-(5'-uridylyl)-L-histidyl-[protein] + diphosphate. The catalysed reaction is L-seryl-[protein] + UTP = O-(5'-uridylyl)-L-seryl-[protein] + diphosphate. The enzyme catalyses L-tyrosyl-[protein] + UTP = O-(5'-uridylyl)-L-tyrosyl-[protein] + diphosphate. Functionally, nucleotidyltransferase involved in the post-translational modification of proteins. It can catalyze the addition of adenosine monophosphate (AMP) or uridine monophosphate (UMP) to a protein, resulting in modifications known as AMPylation and UMPylation. This chain is Protein nucleotidyltransferase YdiU, found in Xanthomonas axonopodis pv. citri (strain 306).